A 514-amino-acid chain; its full sequence is 2,3-bisphosphoglycerate-independent phosphoglycerate mutase (514 aa).

Mn(2+) contacts are provided by D13 and S63. The active-site Phosphoserine intermediate is S63. Substrate contacts are provided by residues H124, 154 to 155 (RD), R186, R192, 258 to 261 (RADR), and K332. Mn(2+) contacts are provided by D399, H403, D440, H441, and H459.

It belongs to the BPG-independent phosphoglycerate mutase family. As to quaternary structure, monomer. The cofactor is Mn(2+).

The catalysed reaction is (2R)-2-phosphoglycerate = (2R)-3-phosphoglycerate. It participates in carbohydrate degradation; glycolysis; pyruvate from D-glyceraldehyde 3-phosphate: step 3/5. Catalyzes the interconversion of 2-phosphoglycerate and 3-phosphoglycerate. The polypeptide is 2,3-bisphosphoglycerate-independent phosphoglycerate mutase (Legionella pneumophila (strain Lens)).